Reading from the N-terminus, the 316-residue chain is MKIVKISPRGYCYGVVDAMVIARNAALDKSLPRPIYILGMIVHNKHVTDAFEEDGIITLDGPSRLEILDKIDSGTVIFTAHGVSPEVKQRAKEKGLTTIDATCPDVTKTHDLIEAKKAEGYHVIYIGKKNHPEPEGAVGIAPDIVHLIEKADDLKTLEIPTDKILVTNQTTMSQWDVQHLMEDIQKKFPTAEFHKEICLATQVRQEAVAKQADVADLTIVVGDPKSNNSNRLAQVSQEIAGTTAYRVADVSEIQLEWLQGVENVAVTAGASTPTPITKEVIAFLDQYDPMNPATWDRIRKVPLQKILPRVKVKKEQ.

Residue C12 participates in [4Fe-4S] cluster binding. Residues H43 and H81 each coordinate (2E)-4-hydroxy-3-methylbut-2-enyl diphosphate. Positions 43 and 81 each coordinate dimethylallyl diphosphate. Isopentenyl diphosphate contacts are provided by H43 and H81. C103 lines the [4Fe-4S] cluster pocket. Position 131 (H131) interacts with (2E)-4-hydroxy-3-methylbut-2-enyl diphosphate. Residue H131 participates in dimethylallyl diphosphate binding. Position 131 (H131) interacts with isopentenyl diphosphate. E133 serves as the catalytic Proton donor. (2E)-4-hydroxy-3-methylbut-2-enyl diphosphate is bound at residue T170. C198 serves as a coordination point for [4Fe-4S] cluster. S226, N228, and S271 together coordinate (2E)-4-hydroxy-3-methylbut-2-enyl diphosphate. 3 residues coordinate dimethylallyl diphosphate: S226, N228, and S271. Isopentenyl diphosphate is bound by residues S226, N228, and S271.

It belongs to the IspH family. It depends on [4Fe-4S] cluster as a cofactor.

It catalyses the reaction isopentenyl diphosphate + 2 oxidized [2Fe-2S]-[ferredoxin] + H2O = (2E)-4-hydroxy-3-methylbut-2-enyl diphosphate + 2 reduced [2Fe-2S]-[ferredoxin] + 2 H(+). The enzyme catalyses dimethylallyl diphosphate + 2 oxidized [2Fe-2S]-[ferredoxin] + H2O = (2E)-4-hydroxy-3-methylbut-2-enyl diphosphate + 2 reduced [2Fe-2S]-[ferredoxin] + 2 H(+). It participates in isoprenoid biosynthesis; dimethylallyl diphosphate biosynthesis; dimethylallyl diphosphate from (2E)-4-hydroxy-3-methylbutenyl diphosphate: step 1/1. Its pathway is isoprenoid biosynthesis; isopentenyl diphosphate biosynthesis via DXP pathway; isopentenyl diphosphate from 1-deoxy-D-xylulose 5-phosphate: step 6/6. In terms of biological role, catalyzes the conversion of 1-hydroxy-2-methyl-2-(E)-butenyl 4-diphosphate (HMBPP) into a mixture of isopentenyl diphosphate (IPP) and dimethylallyl diphosphate (DMAPP). Acts in the terminal step of the DOXP/MEP pathway for isoprenoid precursor biosynthesis. The protein is 4-hydroxy-3-methylbut-2-enyl diphosphate reductase of Bacillus mycoides (strain KBAB4) (Bacillus weihenstephanensis).